The primary structure comprises 186 residues: Ribosome-recycling factor (186 aa).

Belongs to the RRF family.

It is found in the cytoplasm. Its function is as follows. Responsible for the release of ribosomes from messenger RNA at the termination of protein biosynthesis. May increase the efficiency of translation by recycling ribosomes from one round of translation to another. In Rubrobacter xylanophilus (strain DSM 9941 / JCM 11954 / NBRC 16129 / PRD-1), this protein is Ribosome-recycling factor.